A 607-amino-acid polypeptide reads, in one-letter code: Pescadillo homolog (607 aa).

The disordered stretch occupies residues 301-341 (ANVVEQSEKTTEDADEEPETEENLDEFKPADGADNEDSKSL). Residues 313 to 324 (DADEEPETEENL) are compositionally biased toward acidic residues. Over residues 325–339 (DEFKPADGADNEDSK) the composition is skewed to basic and acidic residues. Positions 348–441 (SNTSLFSNFT…ILERTDLYAC (94 aa)) constitute a BRCT domain. Positions 497–604 (ENVEQIDDAE…RDIEKRKKLK (108 aa)) form a coiled coil. The segment at 531–607 (QNSKSAKKTK…EKRKKLKVEN (77 aa)) is disordered. Composition is skewed to basic and acidic residues over residues 544–561 (RDTL…KELS) and 595–607 (RDIE…KVEN).

The protein belongs to the pescadillo family. As to quaternary structure, component of the NOP7 complex, composed of erb1/SPBC4F6.13c, ppp1/SPBC19F5.05c and ytm1/SPAC890.04c. Within the NOP7 complex erb1/SPBC4F6.13c appears to interact directly with ppp1/SPBC19F5.05c and ytm1/SPAC890.04c. The NOP7 complex also associates with the 66S pre-ribosome.

The protein localises to the nucleus. The protein resides in the nucleoplasm. It localises to the nucleolus. In terms of biological role, component of the NOP7 complex, which is required for maturation of the 25S and 5.8S ribosomal RNAs and formation of the 60S ribosome. This Schizosaccharomyces pombe (strain 972 / ATCC 24843) (Fission yeast) protein is Pescadillo homolog (ppp1).